A 136-amino-acid polypeptide reads, in one-letter code: DNA-directed RNA polymerase subunit omega (136 aa).

Residues 90–102 (SSPAAAAVAPQSS) are compositionally biased toward low complexity. The disordered stretch occupies residues 90 to 136 (SSPAAAAVAPQSSSDDKDVQFDRMSEEDLLRGLENLAPPTETDDEGE). Residues 103–120 (SDDKDVQFDRMSEEDLLR) show a composition bias toward basic and acidic residues.

This sequence belongs to the RNA polymerase subunit omega family. The RNAP catalytic core consists of 2 alpha, 1 beta, 1 beta' and 1 omega subunit. When a sigma factor is associated with the core the holoenzyme is formed, which can initiate transcription.

It carries out the reaction RNA(n) + a ribonucleoside 5'-triphosphate = RNA(n+1) + diphosphate. In terms of biological role, promotes RNA polymerase assembly. Latches the N- and C-terminal regions of the beta' subunit thereby facilitating its interaction with the beta and alpha subunits. The protein is DNA-directed RNA polymerase subunit omega of Methylorubrum populi (strain ATCC BAA-705 / NCIMB 13946 / BJ001) (Methylobacterium populi).